The chain runs to 386 residues: Probable dual-specificity RNA methyltransferase RlmN (386 aa).

Glu-123 (proton acceptor) is an active-site residue. A Radical SAM core domain is found at 129-372 (YPTRTTLCIS…ATLRDTRGQD (244 aa)). Residues Cys-136 and Cys-377 are joined by a disulfide bond. Positions 143, 147, and 150 each coordinate [4Fe-4S] cluster. S-adenosyl-L-methionine contacts are provided by residues 198 to 199 (GE), Ser-232, 255 to 257 (SLH), and Asn-334. Catalysis depends on Cys-377, which acts as the S-methylcysteine intermediate.

The protein belongs to the radical SAM superfamily. RlmN family. [4Fe-4S] cluster is required as a cofactor.

The protein localises to the cytoplasm. The catalysed reaction is adenosine(2503) in 23S rRNA + 2 reduced [2Fe-2S]-[ferredoxin] + 2 S-adenosyl-L-methionine = 2-methyladenosine(2503) in 23S rRNA + 5'-deoxyadenosine + L-methionine + 2 oxidized [2Fe-2S]-[ferredoxin] + S-adenosyl-L-homocysteine. The enzyme catalyses adenosine(37) in tRNA + 2 reduced [2Fe-2S]-[ferredoxin] + 2 S-adenosyl-L-methionine = 2-methyladenosine(37) in tRNA + 5'-deoxyadenosine + L-methionine + 2 oxidized [2Fe-2S]-[ferredoxin] + S-adenosyl-L-homocysteine. Functionally, specifically methylates position 2 of adenine 2503 in 23S rRNA and position 2 of adenine 37 in tRNAs. The polypeptide is Probable dual-specificity RNA methyltransferase RlmN (Bifidobacterium adolescentis (strain ATCC 15703 / DSM 20083 / NCTC 11814 / E194a)).